A 369-amino-acid chain; its full sequence is Aminomethyltransferase (369 aa).

It belongs to the GcvT family. As to quaternary structure, the glycine cleavage system is composed of four proteins: P, T, L and H.

It catalyses the reaction N(6)-[(R)-S(8)-aminomethyldihydrolipoyl]-L-lysyl-[protein] + (6S)-5,6,7,8-tetrahydrofolate = N(6)-[(R)-dihydrolipoyl]-L-lysyl-[protein] + (6R)-5,10-methylene-5,6,7,8-tetrahydrofolate + NH4(+). The glycine cleavage system catalyzes the degradation of glycine. In Xanthomonas campestris pv. campestris (strain 8004), this protein is Aminomethyltransferase.